Here is an 869-residue protein sequence, read N- to C-terminus: MPMIDIDWLKDHVEVPEGLTYEQLAKDLVKVGLEEEEIHSSQVTGPIVVGYVVDATPEPQKNGKTINWCHVDCGDEWNETDEDGNKVPRGIICGAPNMKAGEKVVVTLPGAVLPGDFKIEPRKTYGHISNGMCASERELGLGDNHNGIILLRQYGFSEAEYEALKPGQDAMHLLHLDQPLLEINITPDRGYTLSYRGVAREYHHSTGAAYTDPAVALNEKAPEPADYQPGTPVDIDVEIDDNNPIHGVPGCDRYYARIVKDFNPNAHTPNWMRRRLIRAGMRSISLAVDVTNYVMLDLGQPMHAYDLDKLEGPIVVRRANEGEKLTTLDGKEHDLSVEDLLITDSPNGERGSRILGLAGVMGGLYGEVTADTKNILLEAAHFDQVTIARSARRHKIPSEASRRFERGVDTALQPAATQMAAELMAKYGNGEPSEHPNDVNNTPRAKAIHFKASEVARVAGLDVDINRISDILTDIGCTVAGGGNGEFAVTAPSWRPDLNEPCDLVEEIARLVGYDQIPITVPPAPVEGLVGLTPDQQRRRRVADELAEFGMVESLSYPFVGDDDYKAFGFDPEATKKVSVEIANPLYGDRPYLRREILPTLATTVQRNIRRGIENVSLYELGHVYLWDPNAPAIPALPGGVRPTDEQLAALDAGLPEQPDHVAGILTGLAEDDGWMGGKRPVDWSDAVEAVRRIAGRIGAAIELDQPAADDVPVQWHPGRAARVMVGDVFTGWVGELHPRVNEALGFPAHSAAFELNLTALFATLTGKPVQAKPISTFPPVKQDLAFTVDETVTAGQLENVIRKAAGANLESIELFDVFTGEQVGEGKKSLAYAVVFRSPSKTLSAEDSDAIRKAIVAEAAEIGAQLRA.

Residues 41–162 (SQVTGPIVVG…QYGFSEAEYE (122 aa)) form the tRNA-binding domain. Positions 443–519 (PRAKAIHFKA…RLVGYDQIPI (77 aa)) constitute a B5 domain. Mg(2+) is bound by residues D497, D503, E506, and E507. The region spanning 776-868 (STFPPVKQDL…EAAEIGAQLR (93 aa)) is the FDX-ACB domain.

This sequence belongs to the phenylalanyl-tRNA synthetase beta subunit family. Type 1 subfamily. Tetramer of two alpha and two beta subunits. Mg(2+) is required as a cofactor.

It is found in the cytoplasm. The catalysed reaction is tRNA(Phe) + L-phenylalanine + ATP = L-phenylalanyl-tRNA(Phe) + AMP + diphosphate + H(+). This Bifidobacterium longum (strain NCC 2705) protein is Phenylalanine--tRNA ligase beta subunit.